Reading from the N-terminus, the 100-residue chain is Urease subunit gamma (100 aa).

It belongs to the urease gamma subunit family. As to quaternary structure, heterotrimer of UreA (gamma), UreB (beta) and UreC (alpha) subunits. Three heterotrimers associate to form the active enzyme.

The protein resides in the cytoplasm. It catalyses the reaction urea + 2 H2O + H(+) = hydrogencarbonate + 2 NH4(+). Its pathway is nitrogen metabolism; urea degradation; CO(2) and NH(3) from urea (urease route): step 1/1. The sequence is that of Urease subunit gamma from Picosynechococcus sp. (strain ATCC 27264 / PCC 7002 / PR-6) (Agmenellum quadruplicatum).